A 397-amino-acid chain; its full sequence is tRNA pseudouridine synthase D (397 aa).

Asp-76 serves as the catalytic Nucleophile. Positions 151 to 361 (GVPNFFGEQR…MEGERRPLRV (211 aa)) constitute a TRUD domain.

This sequence belongs to the pseudouridine synthase TruD family.

The enzyme catalyses uridine(13) in tRNA = pseudouridine(13) in tRNA. Functionally, responsible for synthesis of pseudouridine from uracil-13 in transfer RNAs. This is tRNA pseudouridine synthase D from Geotalea daltonii (strain DSM 22248 / JCM 15807 / FRC-32) (Geobacter daltonii).